Consider the following 619-residue polypeptide: Grainyhead-like protein 2 homolog (619 aa).

Positions 1–90 (MSQETDNKRL…KINEGHEDQD (90 aa)) are transcription activation. 3 disordered regions span residues 86 to 108 (HEDQDKRNCLPANETPSNLSTGE), 125 to 147 (NDTVESSNREKYTTSLSESPQPA), and 423 to 444 (EERKQNRKKGKSQAAQAQCNNS). Positions 99 to 108 (ETPSNLSTGE) are enriched in polar residues. Positions 239-477 (ASSTFQYTLE…DLDVQPVLFI (239 aa)) constitute a Grh/CP2 DB domain.

The protein belongs to the grh/CP2 family. Grainyhead subfamily.

The protein localises to the nucleus. Its subcellular location is the membrane. Its function is as follows. Transcription factor playing an important role in primary neurulation and in epithelial development. Binds directly to the consensus DNA sequence 5'-AACCGGTT-3' acting as an activator and repressor on distinct target genes. In Xenopus tropicalis (Western clawed frog), this protein is Grainyhead-like protein 2 homolog (grhl2).